Consider the following 605-residue polypeptide: Threonine--tRNA ligase (605 aa).

The catalytic stretch occupies residues 195–497 (DHRKVGKELG…LIEEYAGDFP (303 aa)). Zn(2+) is bound by residues cysteine 294, histidine 345, and histidine 474.

Belongs to the class-II aminoacyl-tRNA synthetase family. In terms of assembly, homodimer. Zn(2+) serves as cofactor.

The protein localises to the cytoplasm. It catalyses the reaction tRNA(Thr) + L-threonine + ATP = L-threonyl-tRNA(Thr) + AMP + diphosphate + H(+). Its function is as follows. Catalyzes the attachment of threonine to tRNA(Thr) in a two-step reaction: L-threonine is first activated by ATP to form Thr-AMP and then transferred to the acceptor end of tRNA(Thr). Also edits incorrectly charged L-seryl-tRNA(Thr). This Thermosynechococcus vestitus (strain NIES-2133 / IAM M-273 / BP-1) protein is Threonine--tRNA ligase.